A 270-amino-acid chain; its full sequence is Putative phosphatase YxeH (270 aa).

D8 (nucleophile) is an active-site residue. Residue D8 coordinates Mg(2+). M9 contributes to the phosphate binding site. D10 contributes to the Mg(2+) binding site. Phosphate is bound by residues 42–43 and K196; that span reads TG. D219 serves as a coordination point for Mg(2+). Residue N222 coordinates phosphate.

The protein belongs to the HAD-like hydrolase superfamily. Cof family. The cofactor is Mg(2+).

The protein is Putative phosphatase YxeH (yxeH) of Bacillus subtilis (strain 168).